Reading from the N-terminus, the 189-residue chain is NADH-quinone oxidoreductase subunit B (189 aa).

Positions 39, 40, 104, and 135 each coordinate [4Fe-4S] cluster.

The protein belongs to the complex I 20 kDa subunit family. In terms of assembly, NDH-1 is composed of 14 different subunits. Subunits NuoB, C, D, E, F, and G constitute the peripheral sector of the complex. [4Fe-4S] cluster serves as cofactor.

The protein resides in the cell inner membrane. The enzyme catalyses a quinone + NADH + 5 H(+)(in) = a quinol + NAD(+) + 4 H(+)(out). Its function is as follows. NDH-1 shuttles electrons from NADH, via FMN and iron-sulfur (Fe-S) centers, to quinones in the respiratory chain. The immediate electron acceptor for the enzyme in this species is believed to be a menaquinone. Couples the redox reaction to proton translocation (for every two electrons transferred, four hydrogen ions are translocated across the cytoplasmic membrane), and thus conserves the redox energy in a proton gradient. This is NADH-quinone oxidoreductase subunit B from Chlorobium phaeobacteroides (strain DSM 266 / SMG 266 / 2430).